A 505-amino-acid polypeptide reads, in one-letter code: Flagellin (505 aa).

Belongs to the bacterial flagellin family.

Its subcellular location is the secreted. The protein resides in the bacterial flagellum. Flagellin is the subunit protein which polymerizes to form the filaments of bacterial flagella. This is Flagellin (fliC) from Salmonella derby.